Reading from the N-terminus, the 169-residue chain is Peptide deformylase (169 aa).

C91 and H133 together coordinate Fe cation. Residue E134 is part of the active site. H137 contributes to the Fe cation binding site.

The protein belongs to the polypeptide deformylase family. Fe(2+) is required as a cofactor.

The enzyme catalyses N-terminal N-formyl-L-methionyl-[peptide] + H2O = N-terminal L-methionyl-[peptide] + formate. In terms of biological role, removes the formyl group from the N-terminal Met of newly synthesized proteins. Requires at least a dipeptide for an efficient rate of reaction. N-terminal L-methionine is a prerequisite for activity but the enzyme has broad specificity at other positions. In Enterobacter sp. (strain 638), this protein is Peptide deformylase.